Here is a 206-residue protein sequence, read N- to C-terminus: Ribosome maturation factor RimP (206 aa).

The disordered stretch occupies residues 164–206 (GGIPEGRAVPSDAVDLTDDSGVDSVEDDEAELEDVENEEGFDK). Acidic residues predominate over residues 178-206 (DLTDDSGVDSVEDDEAELEDVENEEGFDK).

It belongs to the RimP family.

It is found in the cytoplasm. In terms of biological role, required for maturation of 30S ribosomal subunits. In Rhodococcus erythropolis (strain PR4 / NBRC 100887), this protein is Ribosome maturation factor RimP.